A 432-amino-acid chain; its full sequence is MAVIESVYARQILDSRGNPTVEVYLETEDGAQGKGLVPSGASTGEAEAWERRDGDKSVYGGKGVLNAVKAVNEVIAPKVIGMDAADQRALDDLMIELDGTPNKGKLGANAILGVSLAALYASAESAGLPLYRYIGGTNGHILPVPNMNIMNGGAHADFATDIQEYMISPYGFDTYSEALRAGVEVYHTLKNVLKKEGLNTGLGDEGGFAPKMKSNEDSLKYIMDAISAAGYEPGKQIGICLDVASSEFYNKETGKYRFDGEERDSAYMLDYYENLINEYPIVSIEDPFNEEGWEDWAAITARLGDRLQFVGDDLLVTNPARLQKAIDLGAANSLLVKLNQIGSVTETLDAIELATANGYTSMVSHRSGETPDTTISDLAVAKNTRQIKTGAPARGERVAKYNRLLEIEEELGSTAQYAGYTAFKACKKYLAK.

Q163 is a binding site for (2R)-2-phosphoglycerate. Residue E205 is the Proton donor of the active site. 3 residues coordinate Mg(2+): D242, E285, and D312. The (2R)-2-phosphoglycerate site is built by K337, R366, S367, and K388. The Proton acceptor role is filled by K337.

It belongs to the enolase family. Requires Mg(2+) as cofactor.

Its subcellular location is the cytoplasm. The protein resides in the secreted. The protein localises to the cell surface. It catalyses the reaction (2R)-2-phosphoglycerate = phosphoenolpyruvate + H2O. Its pathway is carbohydrate degradation; glycolysis; pyruvate from D-glyceraldehyde 3-phosphate: step 4/5. Catalyzes the reversible conversion of 2-phosphoglycerate (2-PG) into phosphoenolpyruvate (PEP). It is essential for the degradation of carbohydrates via glycolysis. The polypeptide is Enolase (Bifidobacterium longum subsp. infantis (strain ATCC 15697 / DSM 20088 / JCM 1222 / NCTC 11817 / S12)).